Consider the following 189-residue polypeptide: Pyridoxal 5'-phosphate synthase subunit PdxT (189 aa).

Position 46–48 (46–48 (GES)) interacts with L-glutamine. C78 (nucleophile) is an active-site residue. Residues R107 and 136–137 (IR) contribute to the L-glutamine site. Active-site charge relay system residues include H173 and E175.

It belongs to the glutaminase PdxT/SNO family. In terms of assembly, in the presence of PdxS, forms a dodecamer of heterodimers. Only shows activity in the heterodimer.

It catalyses the reaction aldehydo-D-ribose 5-phosphate + D-glyceraldehyde 3-phosphate + L-glutamine = pyridoxal 5'-phosphate + L-glutamate + phosphate + 3 H2O + H(+). The enzyme catalyses L-glutamine + H2O = L-glutamate + NH4(+). Its pathway is cofactor biosynthesis; pyridoxal 5'-phosphate biosynthesis. Catalyzes the hydrolysis of glutamine to glutamate and ammonia as part of the biosynthesis of pyridoxal 5'-phosphate. The resulting ammonia molecule is channeled to the active site of PdxS. The polypeptide is Pyridoxal 5'-phosphate synthase subunit PdxT (Roseiflexus castenholzii (strain DSM 13941 / HLO8)).